The following is a 1053-amino-acid chain: Serine/threonine-protein phosphatase 6 regulatory ankyrin repeat subunit A (1053 aa).

ANK repeat units follow at residues 40-69, 73-102, 106-135, 139-168, 172-201, 205-234, 238-267, 271-301, 305-334, 338-367, 371-400, 404-433, 437-466, 470-500, 504-534, 549-578, 582-611, 616-645, 652-681, 685-714, 718-747, 755-786, 788-817, 822-851, 855-885, 889-918, and 925-954; these read EKRTPLHAAAYLGDAEIIELLILSGARVNA, KWLTPLHRAVASCSEEAVQILLKHSADVNA, NWQTPLHIAAANKAVKCAESLVPLLSNVNV, AGRTALHHAAFSGHGEMVKLLLSRGANINA, KDRRAIHWAAYMGHIEVVKLLVSHGAEVTC, KSYTPLHAAASSGMISVVKYLLDLGVDMNE, YGNTPLHVACYNGQDVVVNELIDCGANVNQ, KGFTPLHFAAASTHGALCLELLVGNGADVNM, DGKTPLHMTALHGRFSRSQTIIQSGAVIDC, NGNTPLHIAARYGHELLINTLITSGADTAK, HGMFPLHLAALSGFSDCCRKLLSSGFDIDT, FGRTCLHAAAAGGNLECLNLLLNTGADFNK, FGRSPLHYAAANCNYQCLFALVGSGASVND, RGCTPLHYAATSDTDGKCLEYLLRNDANPGI, QGYNAVHYSAAYGHRLCLQLIASETPLDVLM, ATISPLHLAAYHGHHQALEVLVQSLLDLDV, SGRTPLDLAAFKGHVECVDVLINQGASILV, LKRTPIHAAATNGHSECLRLLIGNAEPQNA, NGQTPLMLSVLNGHTDCVYSLLNKGANVDA, WGRTALHRGAVTGHEECVDALLQHGAKCLL, RGRTPIHLSAACGHIGVLGALLQSATSVDA, HGYTALHWACYNGHETCVELLLEQDVFQKIDG, AFSPLHCAVINDNEGAAEMLIDSLGASIVN, KGRTPLHAAAFTDHVECLQLLLSQNAQVNS, TGKTPLMMAAENGQTNTVEMLVSSASADLTL, SKNTALHLACGKGHETSALLILEKITDRNL, and ALQTPLHVAARNGLTMVVQELLGKGASVLA. Residues Ser-1007 and Ser-1011 each carry the phosphoserine modification.

In terms of assembly, protein phosphatase 6 (PP6) holoenzyme is proposed to be a heterotrimeric complex formed by the catalytic subunit, a SAPS domain-containing subunit (PP6R) and an ankyrin repeat-domain containing regulatory subunit (ARS). Interacts with PPP1C and HNRPK. Interacts with PPP6C, PPP6R1 and PPP6R3. In terms of processing, ubiquitinated by the ECS(RAB40C) complex leading to its degradation and decreased PP6 activity. In terms of tissue distribution, widely expressed (at protein level).

Its subcellular location is the nucleus. It localises to the nucleoplasm. The protein localises to the cytoplasm. The protein resides in the cytosol. It is found in the cell projection. Its subcellular location is the lamellipodium. Its function is as follows. Putative regulatory subunit of protein phosphatase 6 (PP6) that may be involved in the recognition of phosphoprotein substrates. Involved in the PP6-mediated dephosphorylation of NFKBIE opposing its degradation in response to TNF-alpha. Selectively inhibits the phosphatase activity of PPP1C. Targets PPP1C to modulate HNRPK phosphorylation. Involved in the PP6-mediated dephosphorylation of MOB1 and induced focal adhesion assembly during cell migration. The sequence is that of Serine/threonine-protein phosphatase 6 regulatory ankyrin repeat subunit A (Ankrd28) from Mus musculus (Mouse).